We begin with the raw amino-acid sequence, 285 residues long: Pantothenate synthetase (285 aa).

Residue 30-37 (MGFLHEGH) coordinates ATP. The active-site Proton donor is His37. Gln61 serves as a coordination point for (R)-pantoate. Gln61 provides a ligand contact to beta-alanine. 147–150 (GQKD) contributes to the ATP binding site. (R)-pantoate is bound at residue Gln153. Residues Val176 and 184-187 (KSSR) contribute to the ATP site.

It belongs to the pantothenate synthetase family. Homodimer.

The protein resides in the cytoplasm. The enzyme catalyses (R)-pantoate + beta-alanine + ATP = (R)-pantothenate + AMP + diphosphate + H(+). It participates in cofactor biosynthesis; (R)-pantothenate biosynthesis; (R)-pantothenate from (R)-pantoate and beta-alanine: step 1/1. Functionally, catalyzes the condensation of pantoate with beta-alanine in an ATP-dependent reaction via a pantoyl-adenylate intermediate. This chain is Pantothenate synthetase, found in Listeria monocytogenes serovar 1/2a (strain ATCC BAA-679 / EGD-e).